The primary structure comprises 915 residues: DNA repair-scaffolding protein (915 aa).

A compositionally biased stretch (basic residues) spans 1 to 15 (MPRGSRARGSKRKRS). Disordered regions lie at residues 1–30 (MPRG…RPLQ) and 56–114 (FQNT…EDKT). Residues 56 to 65 (FQNTSGNPSL) show a composition bias toward polar residues. The span at 67–85 (AEEKTITEKHLELCPRPKQ) shows a compositional bias: basic and acidic residues. Polar residues predominate over residues 86 to 107 (ETTTSKSTSGLTDITWSSSGSD). Positions 151-450 (EISDCASCAS…GTAWTHGHKE (300 aa)) are necessary for interaction with RAD51.

In terms of assembly, found in a complex, at least composed of BLM, RAD51 and SPIDR; the complex formation is mediated by SPIDR. Interacts (via C-terminal region) with BLM; the interaction is direct. Interacts with RAD51; the interaction is direct. Interacts (via the C-terminal region) with FIGNL1 (via N-terminal one-half region); the interaction is direct.

The protein resides in the nucleus. In terms of biological role, plays a role in DNA double-strand break (DBS) repair via homologous recombination (HR). Serves as a scaffolding protein that helps to promote the recruitment of DNA-processing enzymes like the helicase BLM and recombinase RAD51 to site of DNA damage, and hence contributes to maintain genomic integrity. The polypeptide is DNA repair-scaffolding protein (SPIDR) (Homo sapiens (Human)).